Here is a 439-residue protein sequence, read N- to C-terminus: Methionine aminopeptidase 2-2 (439 aa).

The disordered stretch occupies residues 1–90; that stretch reads MAAQAPPTDE…SQLFPDKQYP (90 aa). A compositionally biased stretch (basic and acidic residues) spans 10-23; that stretch reads ELSKLSVEDADNKP. Over residues 35–45 the composition is skewed to acidic residues; the sequence is DEDDSEDDAED. Residues 54–68 show a composition bias toward basic residues; the sequence is AKKKKKRKPRKKKKN. His-192 lines the substrate pocket. Residues Asp-212, Asp-223, and His-292 each coordinate a divalent metal cation. His-300 lines the substrate pocket. Positions 325 and 420 each coordinate a divalent metal cation.

This sequence belongs to the peptidase M24A family. Methionine aminopeptidase eukaryotic type 2 subfamily. Co(2+) is required as a cofactor. The cofactor is Zn(2+). Mn(2+) serves as cofactor. Requires Fe(2+) as cofactor.

It localises to the cytoplasm. The catalysed reaction is Release of N-terminal amino acids, preferentially methionine, from peptides and arylamides.. In terms of biological role, cotranslationally removes the N-terminal methionine from nascent proteins. The N-terminal methionine is often cleaved when the second residue in the primary sequence is small and uncharged (Met-Ala-, Cys, Gly, Pro, Ser, Thr, or Val). This is Methionine aminopeptidase 2-2 from Chaetomium globosum (strain ATCC 6205 / CBS 148.51 / DSM 1962 / NBRC 6347 / NRRL 1970) (Soil fungus).